The primary structure comprises 236 residues: RNA-binding protein 24 (236 aa).

Positions 11–88 (TKIFVGGLPY…RKANVNLAYL (78 aa)) constitute an RRM domain. The interval 175 to 199 (QYPYAASPAAAGYVTAGGYGYAVQQ) is necessary for interaction with EIF4E.

Interacts with EIF4E; this interaction prevents EIF4E from binding to p53/TP53 mRNA and inhibits the assembly of translation initiation complex. In terms of assembly, (Microbial infection) Interacts with HCV mature core protein; this interaction, which enhances the interaction of Core with 5'-UTR may favor viral replication over translation. As to quaternary structure, (Microbial infection) Interacts with HCV Serine protease/helicase NS3. In terms of tissue distribution, expressed in fetal and adult heart and skeletal muscles.

The protein localises to the nucleus. It is found in the cytoplasm. In terms of biological role, multifunctional RNA-binding protein involved in the regulation of pre-mRNA splicing, mRNA stability and mRNA translation important for cell fate decision and differentiation. Plays a major role in pre-mRNA alternative splicing regulation. Mediates preferentially muscle-specific exon inclusion in numerous mRNAs important for striated cardiac and skeletal muscle cell differentiation. Binds to intronic splicing enhancer (ISE) composed of stretches of GU-rich motifs localized in flanking intron of exon that will be included by alternative splicing. Involved in embryonic stem cell (ESC) transition to cardiac cell differentiation by promoting pre-mRNA alternative splicing events of several pluripotency and/or differentiation genes. Plays a role in the regulation of mRNA stability. Binds to 3'-untranslated region (UTR) AU-rich elements in target transcripts, such as CDKN1A and MYOG, leading to maintain their stabilities. Involved in myogenic differentiation by regulating MYOG levels. Binds to multiple regions in the mRNA 3'-UTR of TP63 isoform 2, hence inducing its destabilization. Also promotes the destabilization of the CHRM2 mRNA via its binding to a region in the coding sequence. Plays a role in the regulation of mRNA translation. Mediates repression of p53/TP53 mRNA translation through its binding to U-rich element in the 3'-UTR, hence preventing EIF4E from binding to p53/TP53 mRNA and translation initiation. Binds to a huge amount of mRNAs. Required for embryonic heart development, sarcomer and M-band formation in striated muscles. Together with RBM20, promotes the expression of short isoforms of PDLIM5/ENH in cardiomyocytes. Functionally, (Microbial infection) Promotes hepatitis C virus (HCV) replication over translation through the inhibition of viral protein expression. Decreases viral translation by linking viral 5'- and 3'-UTRs, blocking 80S ribosome assembly on the viral IRES and enhancing the interaction of the mature core protein and 5'-UTR. The sequence is that of RNA-binding protein 24 from Homo sapiens (Human).